Here is a 406-residue protein sequence, read N- to C-terminus: Succinylornithine transaminase (406 aa).

Lys252 is subject to N6-(pyridoxal phosphate)lysine.

The protein belongs to the class-III pyridoxal-phosphate-dependent aminotransferase family. AstC subfamily. Pyridoxal 5'-phosphate serves as cofactor.

The enzyme catalyses N(2)-succinyl-L-ornithine + 2-oxoglutarate = N-succinyl-L-glutamate 5-semialdehyde + L-glutamate. It functions in the pathway amino-acid degradation; L-arginine degradation via AST pathway; L-glutamate and succinate from L-arginine: step 3/5. Catalyzes the transamination of N(2)-succinylornithine and alpha-ketoglutarate into N(2)-succinylglutamate semialdehyde and glutamate. Can also act as an acetylornithine aminotransferase. The chain is Succinylornithine transaminase from Escherichia coli O45:K1 (strain S88 / ExPEC).